The following is a 368-amino-acid chain: Peptide chain release factor 2 (368 aa).

Gln-251 carries the N5-methylglutamine modification.

This sequence belongs to the prokaryotic/mitochondrial release factor family. Methylated by PrmC. Methylation increases the termination efficiency of RF2.

It localises to the cytoplasm. Peptide chain release factor 2 directs the termination of translation in response to the peptide chain termination codons UGA and UAA. The chain is Peptide chain release factor 2 from Wolinella succinogenes (strain ATCC 29543 / DSM 1740 / CCUG 13145 / JCM 31913 / LMG 7466 / NCTC 11488 / FDC 602W) (Vibrio succinogenes).